The following is an 838-amino-acid chain: Adenylate cyclase (838 aa).

The segment at methionine 1–valine 541 is catalytic. A regulatory region spans residues glutamate 547–serine 838.

This sequence belongs to the adenylyl cyclase class-1 family.

The protein resides in the cytoplasm. The catalysed reaction is ATP = 3',5'-cyclic AMP + diphosphate. The chain is Adenylate cyclase (cya) from Pasteurella multocida (strain Pm70).